We begin with the raw amino-acid sequence, 102 residues long: Exocrine gland-secreted peptide 1 (102 aa).

A signal peptide spans 1-22 (MTSLPVLLFLIILLLPSMITEG). C63 and C95 are joined by a disulfide.

The protein belongs to the exocrine gland-secreted peptide family. Monomer. As to expression, expressed in the extraorbital lacrimal gland from where it is secreted into tears.

Its subcellular location is the secreted. In terms of biological role, male-specific phermone which is recognized by the Vmn2r116/V2rp5 receptor in the vomeronasal organ (VNO) and enhances female sexual receptive behavior (lordosis) upon male mounting, resulting in successful copulation. This chain is Exocrine gland-secreted peptide 1, found in Mus musculus (Mouse).